Consider the following 144-residue polypeptide: Large ribosomal subunit protein uL11 (144 aa).

This sequence belongs to the universal ribosomal protein uL11 family. As to quaternary structure, part of the ribosomal stalk of the 50S ribosomal subunit. Interacts with L10 and the large rRNA to form the base of the stalk. L10 forms an elongated spine to which L12 dimers bind in a sequential fashion forming a multimeric L10(L12)X complex. In terms of processing, one or more lysine residues are methylated.

In terms of biological role, forms part of the ribosomal stalk which helps the ribosome interact with GTP-bound translation factors. The polypeptide is Large ribosomal subunit protein uL11 (Frankia alni (strain DSM 45986 / CECT 9034 / ACN14a)).